Consider the following 66-residue polypeptide: UPF0457 protein BA_2525/GBAA_2525/BAS2348 (66 aa).

It belongs to the UPF0457 family.

In Bacillus anthracis, this protein is UPF0457 protein BA_2525/GBAA_2525/BAS2348.